The primary structure comprises 559 residues: Asparagine--tRNA ligase, cytoplasmic (559 aa).

The residue at position 72 (Ser-72) is a Phosphoserine. A disordered region spans residues 82-102 (HREQMKNDSREKKEAEDNLRR). Lys-255 is subject to N6-acetyllysine. Ser-493 bears the Phosphoserine mark. Lys-501 carries the post-translational modification N6-acetyllysine.

It belongs to the class-II aminoacyl-tRNA synthetase family. In terms of assembly, homodimer.

It localises to the cytoplasm. It carries out the reaction tRNA(Asn) + L-asparagine + ATP = L-asparaginyl-tRNA(Asn) + AMP + diphosphate + H(+). In terms of biological role, catalyzes the attachment of asparagine to tRNA(Asn) in a two-step reaction: asparagine is first activated by ATP to form Asn-AMP and then transferred to the acceptor end of tRNA(Asn). In addition to its essential role in protein synthesis, acts as a signaling molecule that induced migration of CCR3-expressing cells. Has an essential role in the development of the cerebral cortex, being required for proper proliferation of radial glial cells. The sequence is that of Asparagine--tRNA ligase, cytoplasmic from Mus musculus (Mouse).